The primary structure comprises 300 residues: Porphobilinogen deaminase (300 aa).

Residue Cys239 is modified to S-(dipyrrolylmethanemethyl)cysteine.

Belongs to the HMBS family. As to quaternary structure, monomer. Dipyrromethane serves as cofactor.

It catalyses the reaction 4 porphobilinogen + H2O = hydroxymethylbilane + 4 NH4(+). Its pathway is porphyrin-containing compound metabolism; protoporphyrin-IX biosynthesis; coproporphyrinogen-III from 5-aminolevulinate: step 2/4. Its function is as follows. Tetrapolymerization of the monopyrrole PBG into the hydroxymethylbilane pre-uroporphyrinogen in several discrete steps. This Francisella tularensis subsp. tularensis (strain WY96-3418) protein is Porphobilinogen deaminase.